We begin with the raw amino-acid sequence, 339 residues long: Phenylalanine--tRNA ligase alpha subunit (339 aa).

A Mg(2+)-binding site is contributed by Glu-254.

Belongs to the class-II aminoacyl-tRNA synthetase family. Phe-tRNA synthetase alpha subunit type 1 subfamily. As to quaternary structure, tetramer of two alpha and two beta subunits. Mg(2+) serves as cofactor.

It localises to the cytoplasm. It carries out the reaction tRNA(Phe) + L-phenylalanine + ATP = L-phenylalanyl-tRNA(Phe) + AMP + diphosphate + H(+). The sequence is that of Phenylalanine--tRNA ligase alpha subunit from Clostridium kluyveri (strain ATCC 8527 / DSM 555 / NBRC 12016 / NCIMB 10680 / K1).